A 769-amino-acid chain; its full sequence is 5-methyltetrahydropteroyltriglutamate--homocysteine methyltransferase (769 aa).

Residues 17 to 20 (RELK) and Lys118 contribute to the 5-methyltetrahydropteroyltri-L-glutamate site. L-homocysteine contacts are provided by residues 441–443 (IGS) and Glu494. Residues 441 to 443 (IGS) and Glu494 each bind L-methionine. 5-methyltetrahydropteroyltri-L-glutamate contacts are provided by residues 525–526 (RC) and Trp571. Asp609 serves as a coordination point for L-homocysteine. Asp609 contacts L-methionine. Position 615 (Glu615) interacts with 5-methyltetrahydropteroyltri-L-glutamate. Residues His651, Cys653, and Glu675 each coordinate Zn(2+). The active-site Proton donor is the His705. Residue Cys737 coordinates Zn(2+).

Belongs to the vitamin-B12 independent methionine synthase family. Zn(2+) serves as cofactor.

It carries out the reaction 5-methyltetrahydropteroyltri-L-glutamate + L-homocysteine = tetrahydropteroyltri-L-glutamate + L-methionine. Its pathway is amino-acid biosynthesis; L-methionine biosynthesis via de novo pathway; L-methionine from L-homocysteine (MetE route): step 1/1. Its function is as follows. Catalyzes the transfer of a methyl group from 5-methyltetrahydrofolate to homocysteine resulting in methionine formation. The sequence is that of 5-methyltetrahydropteroyltriglutamate--homocysteine methyltransferase from Blochmanniella floridana.